The primary structure comprises 1220 residues: DNA polymerase catalytic subunit (1220 aa).

Disordered stretches follow at residues 21–43 (GKRPFFRPGSGQTAETERPRPPQ) and 641–691 (QADA…KPGV). Over residues 646–660 (SETSELAMDSQSHAF) the composition is skewed to polar residues.

Belongs to the DNA polymerase type-B family. Forms a complex with the ssDNA-binding protein, the DNA polymerase processivity factor, and the alkaline exonuclease. Interacts with the helicase-primase complex composed of the primase, the helicase and the primase-associated factor; this interaction may coordinate leading and lagging strand DNA synthesis at the replication fork.

It is found in the host nucleus. The catalysed reaction is DNA(n) + a 2'-deoxyribonucleoside 5'-triphosphate = DNA(n+1) + diphosphate. It carries out the reaction Endonucleolytic cleavage to 5'-phosphomonoester.. Its function is as follows. Replicates viral genomic DNA. The replication complex is composed of six viral proteins: the DNA polymerase, processivity factor, primase, primase-associated factor, helicase, and ssDNA-binding protein. Additionally, the polymerase contains an intrinsic ribonuclease H (RNase H) activity that specifically degrades RNA/DNA heteroduplexes or duplex DNA substrates in the 5' to 3' direction. Therefore, it can catalyze the excision of the RNA primers that initiate the synthesis of Okazaki fragments at a replication fork during viral DNA replication. The chain is DNA polymerase catalytic subunit from Equus caballus (Horse).